Consider the following 280-residue polypeptide: MSRYDDLFARLDTAGEGAFVPFIMLSDPSPEEAFQIISTAIEAGADALELGVPFSDPVADGPTVAESHLRALDGGATVDSALEQIKRVRAAYPEVPIGMLIYGNVPFTRGLDRFYQEFAEAGADSILLPDVPVREGAPFSAAAAAAGIDPIYIAPANASEKTLEGVSAASKGYIYAISRDGVTGTERESSTDGLSAVVDNIKKFDGAPILLGFGISSPQHVADAIAAGASGAITGSAITKIIASHCEGEHPNPSTIRDMDGLKKDLTEFISAMKAATKKV.

Active-site proton acceptor residues include glutamate 49 and aspartate 60.

It belongs to the TrpA family. As to quaternary structure, tetramer of two alpha and two beta chains.

The catalysed reaction is (1S,2R)-1-C-(indol-3-yl)glycerol 3-phosphate + L-serine = D-glyceraldehyde 3-phosphate + L-tryptophan + H2O. It functions in the pathway amino-acid biosynthesis; L-tryptophan biosynthesis; L-tryptophan from chorismate: step 5/5. Functionally, the alpha subunit is responsible for the aldol cleavage of indoleglycerol phosphate to indole and glyceraldehyde 3-phosphate. The sequence is that of Tryptophan synthase alpha chain from Corynebacterium glutamicum (strain ATCC 13032 / DSM 20300 / JCM 1318 / BCRC 11384 / CCUG 27702 / LMG 3730 / NBRC 12168 / NCIMB 10025 / NRRL B-2784 / 534).